Reading from the N-terminus, the 340-residue chain is Selenide, water dikinase (340 aa).

Sec17 is an active-site residue. A non-standard amino acid (selenocysteine) is located at residue Sec17. ATP-binding positions include Lys20 and 45–47; that span reads NNE. Asp48 contributes to the Mg(2+) binding site. ATP contacts are provided by residues Asp65, Asp88, and 136-138; that span reads GHT. Residue Asp88 participates in Mg(2+) binding. Asp224 is a binding site for Mg(2+).

It belongs to the selenophosphate synthase 1 family. Class I subfamily. In terms of assembly, homodimer. Mg(2+) is required as a cofactor.

The enzyme catalyses hydrogenselenide + ATP + H2O = selenophosphate + AMP + phosphate + 2 H(+). Its function is as follows. Synthesizes selenophosphate from selenide and ATP. This Campylobacter jejuni subsp. jejuni serotype O:2 (strain ATCC 700819 / NCTC 11168) protein is Selenide, water dikinase.